Reading from the N-terminus, the 595-residue chain is uncharacterized protein (595 aa).

The first 23 residues, 1–23, serve as a signal peptide directing secretion; it reads MLSLSSPPWLLLLVLFFFANGSA. N-linked (GlcNAc...) asparagine glycosylation is found at asparagine 31, asparagine 63, asparagine 88, asparagine 112, asparagine 144, asparagine 187, asparagine 205, asparagine 389, asparagine 480, asparagine 492, and asparagine 506. Polar residues predominate over residues 61-83; it reads LENQTASSSNLNTNNEASDEQTG. Disordered regions lie at residues 61-119 and 141-164; these read LENQ…VSSL and TALNGSGTPPEHQTIGQAPPTKGE. Over residues 84-119 the composition is skewed to low complexity; it reads NSNSNTSSHSRNINGLPSSNSNIDNANSNSSSVSSL.

Its subcellular location is the secreted. This is an uncharacterized protein from Drosophila melanogaster (Fruit fly).